Consider the following 804-residue polypeptide: E3 UFM1-protein ligase 1 homolog (804 aa).

Methionine 1 is subject to N-acetylmethionine. Residues isoleucine 397–isoleucine 483 are disordered. Residues serine 400 to serine 409 are compositionally biased toward low complexity. Residues leucine 463–lysine 475 are compositionally biased toward basic and acidic residues.

This sequence belongs to the UFL1 family.

E3 UFM1-protein ligase that mediates ufmylation of target proteins. The chain is E3 UFM1-protein ligase 1 homolog from Arabidopsis thaliana (Mouse-ear cress).